The primary structure comprises 209 residues: High frequency lysogenization protein HflD homolog (209 aa).

Residues 95-132 are a coiled coil; that stretch reads LERKLAASKGAMNTLGNRIADLSRQLEHFELESDTLMS.

Belongs to the HflD family.

The protein resides in the cytoplasm. It localises to the cell inner membrane. In Cronobacter sakazakii (strain ATCC BAA-894) (Enterobacter sakazakii), this protein is High frequency lysogenization protein HflD homolog.